Reading from the N-terminus, the 1087-residue chain is DNA polymerase II large subunit (1087 aa).

It belongs to the archaeal DNA polymerase II family. Heterodimer of a large subunit and a small subunit.

It carries out the reaction DNA(n) + a 2'-deoxyribonucleoside 5'-triphosphate = DNA(n+1) + diphosphate. It catalyses the reaction Exonucleolytic cleavage in the 3'- to 5'-direction to yield nucleoside 5'-phosphates.. In terms of biological role, possesses two activities: a DNA synthesis (polymerase) and an exonucleolytic activity that degrades single-stranded DNA in the 3'- to 5'-direction. Has a template-primer preference which is characteristic of a replicative DNA polymerase. The chain is DNA polymerase II large subunit (polC) from Thermoplasma acidophilum (strain ATCC 25905 / DSM 1728 / JCM 9062 / NBRC 15155 / AMRC-C165).